Reading from the N-terminus, the 584-residue chain is (+)-larreatricin hydroxylase, chloroplastic (584 aa).

Residues 1-32 constitute a chloroplast transit peptide; it reads MASLSSQSKLLATPYSFPYHTKPSRVSLRRVS. Residues 33 to 79 constitute a thylakoid transit peptide; it reads CKASNDNKDKPNDQEKTFSIDRRNMLIGLGGLYGASNVFPSNQSTLA. 2 cysteine pairs are disulfide-bonded: cysteine 91–cysteine 106 and cysteine 105–cysteine 168. Cu cation is bound by residues histidine 167, histidine 188, histidine 197, histidine 319, histidine 323, and histidine 353. The 2'-(S-cysteinyl)-histidine (Cys-His) cross-link spans 171 to 188; it reads CNGAYDQVGFPDVNIQVH. Residues 432-584 constitute a propeptide, removed in mature form; it reads RLRSKATTTT…KIEFVRDEED (153 aa).

Belongs to the tyrosinase family. Cu(2+) serves as cofactor.

Its subcellular location is the plastid. The protein resides in the chloroplast thylakoid lumen. The enzyme catalyses (+)-larreatricin + AH2 + O2 = (+)-3'-hydroxylarreatricin + A + H2O. Enantio-specific polyphenol oxidase involved in aromatic ring hydroxylation. Involved in the biosynthesis of the creosote bush 8-8' linked lignans. Has a strong preference for the 3' position of (+)-larreatricin. This Larrea tridentata (Creosote bush) protein is (+)-larreatricin hydroxylase, chloroplastic.